We begin with the raw amino-acid sequence, 304 residues long: Serine protease 30 (304 aa).

The signal sequence occupies residues 1–21 (MESWARCIFLLLLQILTGGRG). The propeptide at 22–30 (DILHSGAGK) is activation peptide. A Peptidase S1 domain is found at 31-271 (IVGGQDAPEG…YVDWIQRTLA (241 aa)). Cys-57 and Cys-73 are oxidised to a cystine. His-72 (charge relay system) is an active-site residue. Asn-79 carries an N-linked (GlcNAc...) asparagine glycan. Asp-122 serves as the catalytic Charge relay system. Disulfide bonds link Cys-155/Cys-229, Cys-185/Cys-208, and Cys-219/Cys-247. Catalysis depends on Ser-223, which acts as the Charge relay system. Residues Asn-232 and Asn-273 are each glycosylated (N-linked (GlcNAc...) asparagine). A lipid anchor (GPI-anchor amidated serine) is attached at Ser-275. Positions 276–304 (DAYGCRSRASGAYPALLLVLLAFALPESL) are cleaved as a propeptide — removed in mature form.

Belongs to the peptidase S1 family. In terms of tissue distribution, expressed predominantly in kidney, small intestine and stomach and moderately in thymus, lung, spleen, testis and skin. In the kidney, expressed mainly in collecting duct of renal medulla and cortex.

The protein resides in the cell membrane. Inhibited by aprotinin, leupeptin, benzamidine and soybean trypsin inhibitor. Partially inhibited by PMSF and DFP. Selectively cleaves synthetic peptide substrates of trypsin. Activates the epithelial sodium channel ENaC. The sequence is that of Serine protease 30 (Prss30) from Rattus norvegicus (Rat).